A 120-amino-acid chain; its full sequence is Large ribosomal subunit protein bL19c (120 aa).

It belongs to the bacterial ribosomal protein bL19 family.

It is found in the plastid. It localises to the chloroplast. The sequence is that of Large ribosomal subunit protein bL19c (rpl19) from Trieres chinensis (Marine centric diatom).